Here is a 251-residue protein sequence, read N- to C-terminus: Probable transcriptional regulatory protein BLA_1344 (251 aa).

This sequence belongs to the TACO1 family.

The protein localises to the cytoplasm. The chain is Probable transcriptional regulatory protein BLA_1344 from Bifidobacterium animalis subsp. lactis (strain AD011).